The chain runs to 493 residues: C2H2-type transcription factor ffmA (493 aa).

The span at 1 to 18 (MPMPQYTMQPQYPVSQPH) shows a compositional bias: low complexity. Disordered regions lie at residues 1–50 (MPMP…SRYP), 68–140 (TTVG…YPDG), and 164–202 (EPPR…KNTT). 2 stretches are compositionally biased toward polar residues: residues 69–79 (TVGSLPPSTFL) and 192–202 (NGVNGTAKNTT). The C2H2-type 1 zinc finger occupies 212–234 (FPCPHCNKTYLHAKHLKRHLLRH). The segment at 240–265 (YMCVLCKDTFSRSDILKRHFQKCSIR) adopts a C2H2-type 2; degenerate zinc-finger fold. 2 stretches are compositionally biased toward polar residues: residues 288–307 (QAAA…TVPP) and 484–493 (ASTTLGGDGK). 2 disordered regions span residues 288 to 316 (QAAA…GATF) and 468 to 493 (TTTA…GDGK).

It belongs to the krueppel C2H2-type zinc-finger protein family.

Its subcellular location is the nucleus. Its function is as follows. Transcription factor that acts in coordination with atrR to regulate the expression of the ABC-type multidrug transporter abcG1 and thus plays a role in azole susceptibility. Regulates the expression of genes involved in fermentation. Is able to promote expression from the yeast FLO11 promoter. The sequence is that of C2H2-type transcription factor ffmA from Aspergillus fumigatus (strain CBS 144.89 / FGSC A1163 / CEA10) (Neosartorya fumigata).